Here is a 220-residue protein sequence, read N- to C-terminus: Large ribosomal subunit protein uL1 (220 aa).

This sequence belongs to the universal ribosomal protein uL1 family. As to quaternary structure, part of the 50S ribosomal subunit.

In terms of biological role, binds directly to 23S rRNA. The L1 stalk is quite mobile in the ribosome, and is involved in E site tRNA release. Protein L1 is also a translational repressor protein, it controls the translation of the L11 operon by binding to its mRNA. In Ehrlichia ruminantium (strain Gardel), this protein is Large ribosomal subunit protein uL1.